Reading from the N-terminus, the 462-residue chain is L-seryl-tRNA(Sec) selenium transferase (462 aa).

Lysine 292 is subject to N6-(pyridoxal phosphate)lysine.

This sequence belongs to the SelA family. It depends on pyridoxal 5'-phosphate as a cofactor.

It is found in the cytoplasm. It catalyses the reaction L-seryl-tRNA(Sec) + selenophosphate + H(+) = L-selenocysteinyl-tRNA(Sec) + phosphate. Its pathway is aminoacyl-tRNA biosynthesis; selenocysteinyl-tRNA(Sec) biosynthesis; selenocysteinyl-tRNA(Sec) from L-seryl-tRNA(Sec) (bacterial route): step 1/1. Its function is as follows. Converts seryl-tRNA(Sec) to selenocysteinyl-tRNA(Sec) required for selenoprotein biosynthesis. The polypeptide is L-seryl-tRNA(Sec) selenium transferase (Clostridium perfringens (strain ATCC 13124 / DSM 756 / JCM 1290 / NCIMB 6125 / NCTC 8237 / Type A)).